Reading from the N-terminus, the 97-residue chain is Small ribosomal subunit protein uS19 (97 aa).

Belongs to the universal ribosomal protein uS19 family.

Functionally, protein S19 forms a complex with S13 that binds strongly to the 16S ribosomal RNA. This chain is Small ribosomal subunit protein uS19, found in Salinibacter ruber (strain DSM 13855 / M31).